The primary structure comprises 88 residues: Small ribosomal subunit protein bS16 (88 aa).

This sequence belongs to the bacterial ribosomal protein bS16 family.

This Anaeromyxobacter sp. (strain Fw109-5) protein is Small ribosomal subunit protein bS16.